The sequence spans 361 residues: tRNA-specific 2-thiouridylase MnmA (361 aa).

Residues glycine 11–serine 18 and methionine 37 each bind ATP. Cysteine 106 (nucleophile) is an active-site residue. An intrachain disulfide couples cysteine 106 to cysteine 202. An ATP-binding site is contributed by glycine 130. The interval lysine 152–glutamine 154 is interaction with tRNA. Catalysis depends on cysteine 202, which acts as the Cysteine persulfide intermediate. Residues arginine 308–tyrosine 309 form an interaction with tRNA region.

It belongs to the MnmA/TRMU family.

It is found in the cytoplasm. It catalyses the reaction S-sulfanyl-L-cysteinyl-[protein] + uridine(34) in tRNA + AH2 + ATP = 2-thiouridine(34) in tRNA + L-cysteinyl-[protein] + A + AMP + diphosphate + H(+). Its function is as follows. Catalyzes the 2-thiolation of uridine at the wobble position (U34) of tRNA, leading to the formation of s(2)U34. This Clostridium botulinum (strain Alaska E43 / Type E3) protein is tRNA-specific 2-thiouridylase MnmA.